The sequence spans 237 residues: RNA-binding protein 38 (237 aa).

Residues 1-24 (MLLQPACSPSVFPRPSAAPSAMHG) form a disordered region. Residues 32-109 (TKIFVGGLPY…RKANVNLAYL (78 aa)) enclose the RRM domain.

This sequence belongs to the RBM38 family. Expressed in cardiac and skeletal muscle tissues.

Its subcellular location is the cytoplasm. The protein localises to the cytosol. It localises to the nucleus. Its function is as follows. RNA-binding protein that specifically bind the 3'-UTR of CDKN1A transcripts, leading to maintain the stability of CDKN1A transcripts, thereby acting as a mediator of the p53/TP53 family to regulate CDKN1A. CDKN1A is a cyclin-dependent kinase inhibitor transcriptionally regulated by the p53/TP53 family to induce cell cycle arrest. Has the ability to induce cell cycle arrest in G1 and maintain the stability of CDKN1A transcripts induced by p53/TP53. Also acts as a mRNA splicing factor. Specifically regulates the expression of FGFR2-IIIb, an epithelial cell-specific isoform of FGFR2. Plays a role in myogenic differentiation. In Mus musculus (Mouse), this protein is RNA-binding protein 38 (Rbm38).